The following is a 382-amino-acid chain: Galactokinase (382 aa).

34–37 (EHTD) is a binding site for substrate. 124–130 (GAGLSSS) provides a ligand contact to ATP. Residues Ser-130 and Glu-162 each contribute to the Mg(2+) site. Asp-174 functions as the Proton acceptor in the catalytic mechanism. Tyr-223 contributes to the substrate binding site.

The protein belongs to the GHMP kinase family. GalK subfamily.

It is found in the cytoplasm. The enzyme catalyses alpha-D-galactose + ATP = alpha-D-galactose 1-phosphate + ADP + H(+). The protein operates within carbohydrate metabolism; galactose metabolism. Functionally, catalyzes the transfer of the gamma-phosphate of ATP to D-galactose to form alpha-D-galactose-1-phosphate (Gal-1-P). The sequence is that of Galactokinase from Enterobacter sp. (strain 638).